We begin with the raw amino-acid sequence, 463 residues long: Myocyte-specific enhancer factor 2C (463 aa).

The MADS-box domain maps to 3 to 57 (RKKIQITRIMDERNRQVTFTKRKFGLMKKAYELSVLCDCEIALIIFNSTNKLFQY). An N6-acetyllysine modification is found at Lys-4. Positions 58 to 86 (ASTDMDKVLLKYTEYNEPHESRTNSDIVE) form a DNA-binding region, mef2-type. Ser-59 is subject to Phosphoserine; by CK2. Phosphoserine occurs at positions 98 and 104. Residues Lys-114 and Lys-117 each carry the N6-acetyllysine modification. A disordered region spans residues 178–223 (NSMSPGVTHRPPSAGNTGGLMGGDLTSGAGTSAGNGYGNPRNSPGL). Residues Ser-220 and Ser-226 each carry the phosphoserine modification. N6-acetyllysine occurs at positions 232 and 237. Ser-238 is modified (phosphoserine). An N6-acetyllysine mark is found at Lys-250 and Lys-262. Phosphothreonine; by MAPK7 and MAPK14 occurs at positions 283 and 290. The segment at 358 to 389 (ACTSTHLSQSSNLSLPSTQSLNIKSEPVSPPR) is transcription repressor. Positions 365-380 (SQSSNLSLPSTQSLNI) are enriched in polar residues. A disordered region spans residues 365–463 (SQSSNLSLPS…RMRLSEGWAT (99 aa)). Lys-381 participates in a covalent cross-link: Glycyl lysine isopeptide (Lys-Gly) (interchain with G-Cter in SUMO). The residue at position 386 (Ser-386) is a Phosphoserine; by CDK5. Ser-409 carries the post-translational modification Phosphoserine; by MAPK7. The segment covering 409–422 (SPVDSLSSCSSSYD) has biased composition (low complexity). Over residues 423 to 433 (GSDREDHRNEF) the composition is skewed to basic and acidic residues. At Ser-435 the chain carries Phosphoserine.

As to quaternary structure, forms a complex with class II HDACs in undifferentiating cells. On myogenic differentiation, HDACs are released into the cytoplasm allowing MEF2s to interact with other proteins for activation. Interacts with EP300 in differentiating cells; the interaction acetylates MEF2C leading to increased DNA binding and activation. Interacts with HDAC7 and CARM1. Interacts with HDAC4, HDAC7 and HDAC9; the interaction with HDACs represses transcriptional activity. Interacts with LPIN1. Interacts with MYOCD. Interacts with AKAP13. Interacts with FOXK1; the interaction inhibits MEF2C transactivation activity. Interacts (via N-terminus) with HABP4; this interaction decreases DNA-binding activity of MEF2C in myocardial cells in response to mechanical stress. Interacts with JPH2; interaction specifically takes place with the Junctophilin-2 N-terminal fragment cleavage product of JPH2. Interacts (via MADS box) with SOX18. Interacts with PHF7; the interaction promotes MEF2C binding to its transcription targets. Post-translationally, phosphorylated on Ser-59; which enhances DNA binding activity. Phosphorylated on Ser-386; which is required for Lys-381 sumoylation and inhibits transcriptional activity. In terms of processing, acetylated by p300 on several sites in diffentiating myocytes. Acetylation on Lys-4 increases DNA binding and transactivation. Sumoylated on Lys-381 with SUMO2 but not SUMO1; which represses transcriptional activity. Post-translationally, proteolytically cleaved in cerebellar granule neurons on several sites by caspase 3 and caspase 7 following neurotoxicity. Preferentially cleaves the CDK5-mediated hyperphosphorylated form which leads to neuron apoptosis and transcriptional inactivation.

It is found in the nucleus. Its subcellular location is the cytoplasm. The protein resides in the sarcoplasm. Functionally, transcription activator which binds specifically to the MEF2 element present in the regulatory regions of many muscle-specific genes. Controls cardiac morphogenesis and myogenesis, and is also involved in vascular development. Enhances transcriptional activation mediated by SOX18. Plays an essential role in hippocampal-dependent learning and memory by suppressing the number of excitatory synapses and thus regulating basal and evoked synaptic transmission. Crucial for normal neuronal development, distribution, and electrical activity in the neocortex. Necessary for proper development of megakaryocytes and platelets and for bone marrow B-lymphopoiesis. Required for B-cell survival and proliferation in response to BCR stimulation, efficient IgG1 antibody responses to T-cell-dependent antigens and for normal induction of germinal center B-cells. May also be involved in neurogenesis and in the development of cortical architecture. This Sus scrofa (Pig) protein is Myocyte-specific enhancer factor 2C.